We begin with the raw amino-acid sequence, 70 residues long: Probable protein transport protein Sec61 subunit gamma (70 aa).

Residues 1-33 (MADNADDLFQIPKNFYKEGSHFIKRCVKPDRKE) are Cytoplasmic-facing. Residues 34–62 (FLSISKAVATGFVLMGLIGYIIKLIHIPI) form a helical membrane-spanning segment. The Extracellular portion of the chain corresponds to 63 to 70 (NKVLVGGA).

This sequence belongs to the SecE/SEC61-gamma family. Heterotrimeric complex composed of SEC61-alpha, SEC61-beta and SEC61-gamma.

It localises to the endoplasmic reticulum membrane. Its function is as follows. Necessary for protein translocation in the endoplasmic reticulum. This is Probable protein transport protein Sec61 subunit gamma (sss1) from Schizosaccharomyces pombe (strain 972 / ATCC 24843) (Fission yeast).